The primary structure comprises 559 residues: Large neutral amino acids transporter small subunit 3 (559 aa).

A helical membrane pass occupies residues 20 to 40 (VLENLFFSAVLLGWGSLLIIL). N-linked (GlcNAc...) asparagine glycosylation is present at asparagine 57. 5 consecutive transmembrane segments (helical) span residues 78 to 98 (LGFT…GILM), 105 to 124 (PVRL…MALA), 131 to 151 (LSPL…CLTF), 168 to 188 (MALM…IKLI), and 191 to 211 (AGVA…LIFL). N-linked (GlcNAc...) asparagine glycosylation is found at asparagine 212 and asparagine 229. Phosphoserine occurs at positions 237, 262, and 267. 6 helical membrane-spanning segments follow: residues 304 to 324 (FLWS…YMAA), 357 to 377 (SVFG…GYIM), 419 to 439 (AISA…TCLI), 446 to 466 (FVTF…CGSL), 485 to 505 (LISA…VGPL), and 510 to 530 (FWVN…PSYL).

The protein belongs to the SLC43A transporter (TC 2.A.1.44) family. Ubiquitously expressed in fetus and adult. Highest expression in adult pancreas, liver, skeletal muscle. In fetus, highest expression in liver and lower levels in kidney, and lung. Exclusively expressed in the glomeruli along the glomerular capillary walls.

Its subcellular location is the cell membrane. The protein localises to the apical cell membrane. The protein resides in the endoplasmic reticulum membrane. It catalyses the reaction D-leucine(in) = D-leucine(out). It carries out the reaction L-leucine(in) = L-leucine(out). The enzyme catalyses L-isoleucine(in) = L-isoleucine(out). The catalysed reaction is L-methionine(in) = L-methionine(out). It catalyses the reaction L-phenylalanine(in) = L-phenylalanine(out). It carries out the reaction L-valine(in) = L-valine(out). Functionally, uniport that mediates the transport of neutral amino acids such as L-leucine, L-isoleucine, L-valine, and L-phenylalanine. The transport activity is sodium ions-independent, electroneutral and mediated by a facilitated diffusion. In Homo sapiens (Human), this protein is Large neutral amino acids transporter small subunit 3.